Here is a 182-residue protein sequence, read N- to C-terminus: Putative manganese efflux pump MntP 2 (182 aa).

6 consecutive transmembrane segments (helical) span residues 2–22, 37–57, 63–83, 104–123, 127–149, and 162–182; these read IELT…SIAL, AGGF…YLGV, IGGI…LKMI, LLLL…LTLT, LPLW…GGVH, and AEYL…IEHS.

This sequence belongs to the MntP (TC 9.B.29) family.

It is found in the cell inner membrane. Probably functions as a manganese efflux pump. The protein is Putative manganese efflux pump MntP 2 of Wolinella succinogenes (strain ATCC 29543 / DSM 1740 / CCUG 13145 / JCM 31913 / LMG 7466 / NCTC 11488 / FDC 602W) (Vibrio succinogenes).